The primary structure comprises 71 residues: uncharacterized protein (71 aa).

The protein belongs to the varicellovirus ORF57 protein family.

This is an uncharacterized protein from Homo sapiens (Human).